Reading from the N-terminus, the 315-residue chain is Ribosomal RNA small subunit methyltransferase H (315 aa).

S-adenosyl-L-methionine contacts are provided by residues 37-39 (GGH), D57, F83, D105, and Q112.

The protein belongs to the methyltransferase superfamily. RsmH family.

It localises to the cytoplasm. It carries out the reaction cytidine(1402) in 16S rRNA + S-adenosyl-L-methionine = N(4)-methylcytidine(1402) in 16S rRNA + S-adenosyl-L-homocysteine + H(+). In terms of biological role, specifically methylates the N4 position of cytidine in position 1402 (C1402) of 16S rRNA. This Pseudomonas putida (strain ATCC 700007 / DSM 6899 / JCM 31910 / BCRC 17059 / LMG 24140 / F1) protein is Ribosomal RNA small subunit methyltransferase H.